The primary structure comprises 409 residues: Elongation factor Tu, chloroplastic (409 aa).

The tr-type G domain occupies 10–214 (KPHINIGTIG…QVDSYIPTPT (205 aa)). Residues 19–26 (GHVDHGKT) are G1. 19-26 (GHVDHGKT) contributes to the GTP binding site. Thr-26 serves as a coordination point for Mg(2+). N6-methyllysine is present on Lys-57. The G2 stretch occupies residues 60 to 64 (GITIN). The segment at 81–84 (DCPG) is G3. Residues 81 to 85 (DCPGH) and 136 to 139 (NKED) each bind GTP. Residues 136-139 (NKED) are G4. The segment at 174–176 (SAL) is G5.

The protein belongs to the TRAFAC class translation factor GTPase superfamily. Classic translation factor GTPase family. EF-Tu/EF-1A subfamily.

The protein resides in the plastid. The protein localises to the chloroplast. The enzyme catalyses GTP + H2O = GDP + phosphate + H(+). Functionally, GTP hydrolase that promotes the GTP-dependent binding of aminoacyl-tRNA to the A-site of ribosomes during protein biosynthesis. The protein is Elongation factor Tu, chloroplastic (tufA) of Euglena gracilis.